We begin with the raw amino-acid sequence, 302 residues long: Calpain-1 catalytic subunit (302 aa).

The domain III stretch occupies residues 1–114; it reads RESGCSFVLA…KRAGTQELDD (114 aa). The linker stretch occupies residues 115-130; the sequence is QIQANLPDEQVLSAEE. The tract at residues 131–301 is domain IV; the sequence is IDENFKALFR…LFKWLQLTMF (171 aa). 3 consecutive EF-hand domains span residues 173 to 206, 203 to 238, and 268 to 302; these read FSMESCRSMVNLMDRDGNGKLGLVEFNILWNRIR, NRIRNYLAIFRKFDLDKSGSMSAYEMRMAIESAGFK, and VRLETMFRFFKTLDTDLDGVVTFDLFKWLQLTMFA. Ca(2+) is bound by residues Asp-186, Asp-188, Asn-190, Lys-192, Glu-197, Asp-216, Asp-218, Ser-220, Ser-222, and Glu-227.

It belongs to the peptidase C2 family. Forms a heterodimer with a small (regulatory) subunit CAPNS1. It depends on Ca(2+) as a cofactor. In terms of processing, the N-terminus is blocked. Undergoes calcium-induced successive autoproteolytic cleavages that generate a membrane-bound 78 kDa active form and an intracellular 75 kDa active form. Calpastatin reduces with high efficiency the transition from 78 kDa to 75 kDa calpain forms. Ubiquitous.

The protein resides in the cytoplasm. The protein localises to the cell membrane. It catalyses the reaction Broad endopeptidase specificity.. With respect to regulation, activated by micromolar concentrations of calcium and inhibited by calpastatin. Calcium-regulated non-lysosomal thiol-protease which catalyzes limited proteolysis of substrates involved in cytoskeletal remodeling and signal transduction. Proteolytically cleaves CTBP1. Cleaves and activates caspase-7 (CASP7). The protein is Calpain-1 catalytic subunit of Oryctolagus cuniculus (Rabbit).